Here is a 379-residue protein sequence, read N- to C-terminus: Lipoyl synthase 2, mitochondrial (379 aa).

Positions 106, 111, 117, 137, 141, 144, and 352 each coordinate [4Fe-4S] cluster. One can recognise a Radical SAM core domain in the interval glutamate 122 to leucine 341.

The protein belongs to the radical SAM superfamily. Lipoyl synthase family. The cofactor is [4Fe-4S] cluster.

It is found in the mitochondrion. It carries out the reaction [[Fe-S] cluster scaffold protein carrying a second [4Fe-4S](2+) cluster] + N(6)-octanoyl-L-lysyl-[protein] + 2 oxidized [2Fe-2S]-[ferredoxin] + 2 S-adenosyl-L-methionine + 4 H(+) = [[Fe-S] cluster scaffold protein] + N(6)-[(R)-dihydrolipoyl]-L-lysyl-[protein] + 4 Fe(3+) + 2 hydrogen sulfide + 2 5'-deoxyadenosine + 2 L-methionine + 2 reduced [2Fe-2S]-[ferredoxin]. It participates in protein modification; protein lipoylation via endogenous pathway; protein N(6)-(lipoyl)lysine from octanoyl-[acyl-carrier-protein]: step 2/2. Catalyzes the radical-mediated insertion of two sulfur atoms into the C-6 and C-8 positions of the octanoyl moiety bound to the lipoyl domains of lipoate-dependent enzymes, thereby converting the octanoylated domains into lipoylated derivatives. The protein is Lipoyl synthase 2, mitochondrial of Drosophila yakuba (Fruit fly).